The chain runs to 263 residues: Thiamine thiazole synthase (263 aa).

Residues Ser36, 55–56 (ER), Gly63, Val127, and 157–159 (HVD) each bind NAD(+). Fe cation is bound by residues Asp159 and His174. Met228 serves as a coordination point for NAD(+). Position 238 (Arg238) interacts with glycine.

It belongs to the THI4 family. As to quaternary structure, homooctamer; tetramer of dimers. The cofactor is Fe(2+).

It carries out the reaction hydrogen sulfide + glycine + NAD(+) = ADP-5-ethyl-4-methylthiazole-2-carboxylate + nicotinamide + 3 H2O + H(+). It participates in cofactor biosynthesis; thiamine diphosphate biosynthesis. Its function is as follows. Involved in the biosynthesis of the thiazole moiety of thiamine. Catalyzes the conversion of NAD and glycine to adenosine diphosphate 5-(2-hydroxyethyl)-4-methylthiazole-2-carboxylate (ADT), an adenylated thiazole intermediate, using free sulfide as a source of sulfur. The chain is Thiamine thiazole synthase from Solidesulfovibrio magneticus (strain ATCC 700980 / DSM 13731 / RS-1) (Desulfovibrio magneticus).